The sequence spans 1028 residues: Protein SMAX1-LIKE 5 (1028 aa).

The region spanning 8 to 199 is the Clp R domain; the sequence is IQQTLTTEAA…CVEDCSVSSV (192 aa). 2 repeat regions span residues 12-102 and 116-199; these read LTTE…LNRL and LANA…VSSV. Positions 871-875 match the EAR motif; it reads LDLNI.

Belongs to the ClpA/ClpB family. In terms of assembly, interacts probably with TPL/TPR in an EAR-motif dependent manner. In terms of tissue distribution, detected in roots, seedlings and axillary branches.

Its function is as follows. May function in a transcriptional corepressor complex. The protein is Protein SMAX1-LIKE 5 of Arabidopsis thaliana (Mouse-ear cress).